A 157-amino-acid polypeptide reads, in one-letter code: SsrA-binding protein (157 aa).

Positions 136–151 (KRETSAKRDWSREKQR) are enriched in basic and acidic residues. Residues 136-157 (KRETSAKRDWSREKQRLLKQNS) are disordered.

It belongs to the SmpB family.

Its subcellular location is the cytoplasm. Functionally, required for rescue of stalled ribosomes mediated by trans-translation. Binds to transfer-messenger RNA (tmRNA), required for stable association of tmRNA with ribosomes. tmRNA and SmpB together mimic tRNA shape, replacing the anticodon stem-loop with SmpB. tmRNA is encoded by the ssrA gene; the 2 termini fold to resemble tRNA(Ala) and it encodes a 'tag peptide', a short internal open reading frame. During trans-translation Ala-aminoacylated tmRNA acts like a tRNA, entering the A-site of stalled ribosomes, displacing the stalled mRNA. The ribosome then switches to translate the ORF on the tmRNA; the nascent peptide is terminated with the 'tag peptide' encoded by the tmRNA and targeted for degradation. The ribosome is freed to recommence translation, which seems to be the essential function of trans-translation. In Cereibacter sphaeroides (strain ATCC 17029 / ATH 2.4.9) (Rhodobacter sphaeroides), this protein is SsrA-binding protein.